Consider the following 241-residue polypeptide: ATP synthase subunit a (241 aa).

5 consecutive transmembrane segments (helical) span residues 30–50 (GQVF…ISVG), 91–111 (FIGT…LIPW), 128–148 (INTT…AGLS), 193–213 (LVVG…VMFL), and 214–234 (GLFT…YYIG).

The protein belongs to the ATPase A chain family. F-type ATPases have 2 components, CF(1) - the catalytic core - and CF(0) - the membrane proton channel. CF(1) has five subunits: alpha(3), beta(3), gamma(1), delta(1), epsilon(1). CF(0) has four main subunits: a, b, b' and c.

It is found in the cellular thylakoid membrane. Key component of the proton channel; it plays a direct role in the translocation of protons across the membrane. This is ATP synthase subunit a from Prochlorococcus marinus subsp. pastoris (strain CCMP1986 / NIES-2087 / MED4).